Consider the following 354-residue polypeptide: MDMMLLVQGACCSNQWLAAVLLSLCCLLPSCLPAGQSVDFPWAAVDNMMVRKGDTAVLRCYLEDGASKGAWLNRSSIIFAGGDKWSVDPRVSISTLNKRDYSLQIQNVDVTDDGPYTCSVQTQHTPRTMQVHLTVQVPPKIYDISSDMTINEGTNVTLTCLATGKPEPSISWRHISPSAKPFENGQYLDIYGITRDQAGEYECSAENDVSFPDVRKVKVVVNFAPTIQEIKSGTMTPGRSGLIRCEGAGVPPPAFEWYKGEKKLFNGQQGIIIQNFSTRSILTVTNVTQEHFGNYTCVAANKLGTTNASLPLNPPSTAQYGITGSADVLFSCWYLVLTLSSFTSIFYLKNAILQ.

A signal peptide spans 1–37; sequence MDMMLLVQGACCSNQWLAAVLLSLCCLLPSCLPAGQS. Ig-like C2-type domains follow at residues 38–134, 139–221, and 225–313; these read VDFP…VHLT, PKIY…KVVV, and PTIQ…LPLN. The cysteines at positions 60 and 118 are disulfide-linked. N-linked (GlcNAc...) asparagine glycosylation is found at Asn-73 and Asn-155. 2 disulfide bridges follow: Cys-160–Cys-203 and Cys-245–Cys-297. Phosphotyrosine is present on Tyr-187. N-linked (GlcNAc...) asparagine glycans are attached at residues Asn-275, Asn-286, Asn-294, and Asn-307. Gly-324 carries GPI-anchor amidated glycine lipidation. A propeptide spans 325 to 354 (removed in mature form); it reads SADVLFSCWYLVLTLSSFTSIFYLKNAILQ.

This sequence belongs to the immunoglobulin superfamily. IgLON family.

The protein localises to the cell membrane. In terms of biological role, may be involved in cell-adhesion. May function as a trans-neural growth-promoting factor in regenerative axon sprouting in the mammalian brain. The chain is Neuronal growth regulator 1 (NEGR1) from Pongo abelii (Sumatran orangutan).